The chain runs to 213 residues: Small ribosomal subunit protein uS3 (213 aa).

The 69-residue stretch at 38-106 folds into the KH type-2 domain; it reads IRKYVKKTLY…EFSIEVNEIR (69 aa).

This sequence belongs to the universal ribosomal protein uS3 family. As to quaternary structure, part of the 30S ribosomal subunit. Forms a tight complex with proteins S10 and S14.

Binds the lower part of the 30S subunit head. Binds mRNA in the 70S ribosome, positioning it for translation. This chain is Small ribosomal subunit protein uS3, found in Oleidesulfovibrio alaskensis (strain ATCC BAA-1058 / DSM 17464 / G20) (Desulfovibrio alaskensis).